The following is a 425-amino-acid chain: Enolase (425 aa).

(2R)-2-phosphoglycerate is bound at residue Q163. Catalysis depends on E205, which acts as the Proton donor. D242, E285, and D312 together coordinate Mg(2+). Residues K337, R366, S367, and K388 each coordinate (2R)-2-phosphoglycerate. Catalysis depends on K337, which acts as the Proton acceptor.

Belongs to the enolase family. Mg(2+) is required as a cofactor.

The protein localises to the cytoplasm. Its subcellular location is the secreted. The protein resides in the cell surface. The enzyme catalyses (2R)-2-phosphoglycerate = phosphoenolpyruvate + H2O. Its pathway is carbohydrate degradation; glycolysis; pyruvate from D-glyceraldehyde 3-phosphate: step 4/5. Catalyzes the reversible conversion of 2-phosphoglycerate (2-PG) into phosphoenolpyruvate (PEP). It is essential for the degradation of carbohydrates via glycolysis. In Paracoccus denitrificans (strain Pd 1222), this protein is Enolase.